The chain runs to 117 residues: Fluoride-specific ion channel FluC 1 (117 aa).

4 consecutive transmembrane segments (helical) span residues 1-21, 35-55, 60-80, and 97-117; these read MIHI…RAWL, IATL…YGIA, LFSL…STLS, and FSYS…GYSI. The Na(+) site is built by Gly71 and Thr74.

The protein belongs to the fluoride channel Fluc/FEX (TC 1.A.43) family.

The protein resides in the cell membrane. The catalysed reaction is fluoride(in) = fluoride(out). Its activity is regulated as follows. Na(+) is not transported, but it plays an essential structural role and its presence is essential for fluoride channel function. Functionally, fluoride-specific ion channel. Important for reducing fluoride concentration in the cell, thus reducing its toxicity. The chain is Fluoride-specific ion channel FluC 1 from Staphylococcus haemolyticus (strain JCSC1435).